Consider the following 307-residue polypeptide: tRNA dimethylallyltransferase (307 aa).

16 to 23 is an ATP binding site; the sequence is GCTAVGKT. 18–23 contacts substrate; the sequence is TAVGKT. The tract at residues 41–44 is interaction with substrate tRNA; it reads DSLL.

This sequence belongs to the IPP transferase family. As to quaternary structure, monomer. Mg(2+) is required as a cofactor.

The enzyme catalyses adenosine(37) in tRNA + dimethylallyl diphosphate = N(6)-dimethylallyladenosine(37) in tRNA + diphosphate. In terms of biological role, catalyzes the transfer of a dimethylallyl group onto the adenine at position 37 in tRNAs that read codons beginning with uridine, leading to the formation of N6-(dimethylallyl)adenosine (i(6)A). In Opitutus terrae (strain DSM 11246 / JCM 15787 / PB90-1), this protein is tRNA dimethylallyltransferase.